The primary structure comprises 258 residues: Small ribosomal subunit protein uS2 (258 aa).

The tract at residues 227 to 258 is disordered; sequence GEQFAPASEQKEEVKTQEVQEVEDSNDDVIDD. Basic and acidic residues predominate over residues 235-244; the sequence is EQKEEVKTQE. The segment covering 246–258 has biased composition (acidic residues); it reads QEVEDSNDDVIDD.

It belongs to the universal ribosomal protein uS2 family.

The sequence is that of Small ribosomal subunit protein uS2 from Caldicellulosiruptor saccharolyticus (strain ATCC 43494 / DSM 8903 / Tp8T 6331).